Here is a 592-residue protein sequence, read N- to C-terminus: Neurogenic locus notch homolog protein (592 aa).

The signal sequence occupies residues 1–19 (MIFVLTLVALCTAIHCPDG). EGF-like domains are found at residues 64 to 104 (YPSI…DYQV), 106 to 146 (VPEA…EKCT), 267 to 307 (YPEA…NTCI), 353 to 387 (NSQT…PTCE), 453 to 488 (VPNS…ALCE), and 546 to 588 (IDGE…KHCN). 15 disulfides stabilise this stretch: Cys68-Cys82, Cys76-Cys92, Cys110-Cys123, Cys117-Cys134, Cys136-Cys145, Cys271-Cys284, Cys278-Cys293, Cys295-Cys306, Cys362-Cys375, Cys377-Cys386, Cys457-Cys471, Cys478-Cys487, Cys550-Cys565, Cys555-Cys576, and Cys578-Cys587. Asn552 is a glycosylation site (N-linked (GlcNAc...) asparagine).

This sequence belongs to the NOTCH family. As to quaternary structure, interacts with EB1.

Its subcellular location is the cell projection. It is found in the cilium. The protein resides in the flagellum. The protein localises to the cytoplasm. It localises to the cytoskeleton. Its subcellular location is the flagellum axoneme. The sequence is that of Neurogenic locus notch homolog protein from Giardia intestinalis (strain ATCC 50803 / WB clone C6) (Giardia lamblia).